The sequence spans 503 residues: 2-(3-amino-3-carboxypropyl)histidine synthase subunit 2 (503 aa).

[4Fe-4S] cluster-binding residues include cysteine 93, cysteine 114, and cysteine 334. The disordered stretch occupies residues 464 to 503 (GLDSVDEGEGPSKLYEGQSGIAKGYVGEGSKEKIQRDFGK). Residues 492–503 (GSKEKIQRDFGK) are compositionally biased toward basic and acidic residues.

The protein belongs to the DPH1/DPH2 family. DPH2 subfamily. Component of the 2-(3-amino-3-carboxypropyl)histidine synthase complex composed of dph1, dph2, dph3 and a NADH-dependent reductase, predominantly cbr1. The cofactor is [4Fe-4S] cluster.

It localises to the cytoplasm. Its pathway is protein modification; peptidyl-diphthamide biosynthesis. In terms of biological role, required for the first step of diphthamide biosynthesis, a post-translational modification of histidine which occurs in elongation factor 2. Dph1 and dph2 transfer a 3-amino-3-carboxypropyl (ACP) group from S-adenosyl-L-methionine (SAM) to a histidine residue, the reaction is assisted by a reduction system comprising dph3 and a NADH-dependent reductase, predominantly cbr1. Facilitates the reduction of the catalytic iron-sulfur cluster found in the dph1 subunit. In Schizosaccharomyces pombe (strain 972 / ATCC 24843) (Fission yeast), this protein is 2-(3-amino-3-carboxypropyl)histidine synthase subunit 2.